A 1218-amino-acid chain; its full sequence is DNA-directed RNA polymerase subunit beta' (1218 aa).

Residues Cys60, Cys62, Cys75, and Cys78 each contribute to the Zn(2+) site. Residues Asp455, Asp457, and Asp459 each coordinate Mg(2+). Zn(2+) contacts are provided by Cys824, Cys897, Cys904, and Cys907. Residues Glu1195–Glu1218 are disordered.

Belongs to the RNA polymerase beta' chain family. In terms of assembly, the RNAP catalytic core consists of 2 alpha, 1 beta, 1 beta' and 1 omega subunit. When a sigma factor is associated with the core the holoenzyme is formed, which can initiate transcription. Mg(2+) is required as a cofactor. Zn(2+) serves as cofactor.

The catalysed reaction is RNA(n) + a ribonucleoside 5'-triphosphate = RNA(n+1) + diphosphate. DNA-dependent RNA polymerase catalyzes the transcription of DNA into RNA using the four ribonucleoside triphosphates as substrates. The sequence is that of DNA-directed RNA polymerase subunit beta' from Natranaerobius thermophilus (strain ATCC BAA-1301 / DSM 18059 / JW/NM-WN-LF).